We begin with the raw amino-acid sequence, 142 residues long: Probable inactive dual specificity protein phosphatase-like At4g18593 (142 aa).

Belongs to the protein-tyrosine phosphatase family. Non-receptor class dual specificity subfamily.

The polypeptide is Probable inactive dual specificity protein phosphatase-like At4g18593 (Arabidopsis thaliana (Mouse-ear cress)).